We begin with the raw amino-acid sequence, 446 residues long: Ribosomal protein uS12 methylthiotransferase RimO (446 aa).

Residues 9 to 121 enclose the MTTase N-terminal domain; it reads PKVGFVSLGC…VLDAIHAALP (113 aa). [4Fe-4S] cluster contacts are provided by C18, C54, C83, C152, C156, and C159. Residues 138-375 form the Radical SAM core domain; that stretch reads LTPPHYAYLK…MAVQEAISRQ (238 aa). The TRAM domain maps to 378–445; sequence QRRVGQRQRV…AHDLYGMVVS (68 aa).

This sequence belongs to the methylthiotransferase family. RimO subfamily. The cofactor is [4Fe-4S] cluster.

Its subcellular location is the cytoplasm. The enzyme catalyses L-aspartate(89)-[ribosomal protein uS12]-hydrogen + (sulfur carrier)-SH + AH2 + 2 S-adenosyl-L-methionine = 3-methylsulfanyl-L-aspartate(89)-[ribosomal protein uS12]-hydrogen + (sulfur carrier)-H + 5'-deoxyadenosine + L-methionine + A + S-adenosyl-L-homocysteine + 2 H(+). Catalyzes the methylthiolation of an aspartic acid residue of ribosomal protein uS12. This chain is Ribosomal protein uS12 methylthiotransferase RimO, found in Acidithiobacillus ferrooxidans (strain ATCC 23270 / DSM 14882 / CIP 104768 / NCIMB 8455) (Ferrobacillus ferrooxidans (strain ATCC 23270)).